The following is a 790-amino-acid chain: Vacuolar protein sorting-associated protein 35B (790 aa).

The protein belongs to the VPS35 family. As to quaternary structure, component of the retromer complex which consists of VPS29 (MAG1), VPS26 (VPS26A or VPS26B), VPS35 (VPS35A or VPS35B or VPS35C), VPS5/17 (SNX1 or SNX2A or SNX2B). Component of a retromer subcomplex consisting of VPS29 (MAG1), VPS26 (VPS26A or VPS26B), VPS35 (VPS35A or VPS35B or VPS35C). In terms of tissue distribution, expressed in siliques and maturing seeds (at protein level).

The protein resides in the cytoplasm. The protein localises to the endosome membrane. It localises to the prevacuolar compartment membrane. It is found in the golgi apparatus. Its subcellular location is the trans-Golgi network membrane. Its function is as follows. Plays a role in vesicular protein sorting. Component of the membrane-associated retromer complex which is essential in endosome-to-Golgi retrograde transport. Also involved in the efficient sorting of seed storage proteins globulin 12S and albumin 2S. The VPS29-VPS26-VPS35 subcomplex may be involved in recycling of specific cargos from endosome to the plasma membrane. The polypeptide is Vacuolar protein sorting-associated protein 35B (VPS35B) (Arabidopsis thaliana (Mouse-ear cress)).